We begin with the raw amino-acid sequence, 505 residues long: Cytochrome c oxidase subunit 1 (505 aa).

A helical transmembrane segment spans residues Leu-14–Ile-34. The Ca(2+) site is built by Glu-37 and Gly-42. The next 6 membrane-spanning stretches (helical) occupy residues Val-55 to Gly-75, Asn-98 to Glu-118, Ala-143 to Val-163, Leu-180 to Ala-200, Leu-229 to Val-249, and Val-261 to Val-281. His-60 is a binding site for Fe(II)-heme a. The Cu cation site is built by His-235 and Tyr-239. A cross-link (1'-histidyl-3'-tyrosine (His-Tyr)) is located at residues His-235–Tyr-239. Tyr-239 contacts O2. Cu cation contacts are provided by His-284 and His-285. A run of 2 helical transmembrane segments spans residues Ala-302 to Tyr-322 and Met-332 to Leu-352. Mg(2+) contacts are provided by His-362 and Asp-363. His-370 contacts heme a3. His-372 contributes to the Fe(II)-heme a binding site. The next 3 membrane-spanning stretches (helical) occupy residues Val-374–Ile-394, Phe-408–Ala-428, and Ala-446–Phe-466.

The protein belongs to the heme-copper respiratory oxidase family. As to quaternary structure, component of the cytochrome c oxidase (complex IV, CIV), a multisubunit enzyme composed of a catalytic core of 3 subunits and several supernumerary subunits. The complex exists as a monomer or a dimer and forms supercomplexes (SCs) in the inner mitochondrial membrane with ubiquinol-cytochrome c oxidoreductase (cytochrome b-c1 complex, complex III, CIII). It depends on heme as a cofactor. The cofactor is Cu cation.

Its subcellular location is the mitochondrion inner membrane. The catalysed reaction is 4 Fe(II)-[cytochrome c] + O2 + 8 H(+)(in) = 4 Fe(III)-[cytochrome c] + 2 H2O + 4 H(+)(out). The protein operates within energy metabolism; oxidative phosphorylation. Functionally, component of the cytochrome c oxidase, the last enzyme in the mitochondrial electron transport chain which drives oxidative phosphorylation. The respiratory chain contains 3 multisubunit complexes succinate dehydrogenase (complex II, CII), ubiquinol-cytochrome c oxidoreductase (cytochrome b-c1 complex, complex III, CIII) and cytochrome c oxidase (complex IV, CIV), that cooperate to transfer electrons derived from NADH and succinate to molecular oxygen, creating an electrochemical gradient over the inner membrane that drives transmembrane transport and the ATP synthase. Cytochrome c oxidase is the component of the respiratory chain that catalyzes the reduction of oxygen to water. Electrons originating from reduced cytochrome c in the intermembrane space (IMS) are transferred via the dinuclear copper A center (CU(A)) of subunit 2 and heme A of subunit 1 to the active site in subunit 1, a binuclear center (BNC) formed by heme A3 and copper B (CU(B)). The BNC reduces molecular oxygen to 2 water molecules using 4 electrons from cytochrome c in the IMS and 4 protons from the mitochondrial matrix. This is Cytochrome c oxidase subunit 1 (COX1) from Chlamydomonas reinhardtii (Chlamydomonas smithii).